The sequence spans 300 residues: ESX-5 secretion-associated protein EspG5 (300 aa).

Belongs to the EspG family. As to quaternary structure, interacts specifically with ESX-5-dependent PE/PPE proteins. Forms a 1:1:1 heterotrimeric complex with the PE25/PPE41 dimer, via PPE41. Binding of EspG5 does not cause conformational changes in the PE25/PPE41 dimer. Forms a 1:1:1 heterotrimeric complex with the PE8/PPE15 dimer, via PPE15.

The protein resides in the cytoplasm. Its function is as follows. Specific chaperone for cognate PE/PPE proteins. Plays an important role in preventing aggregation of PE/PPE dimers. In Mycobacterium tuberculosis (strain ATCC 25618 / H37Rv), this protein is ESX-5 secretion-associated protein EspG5.